Here is a 508-residue protein sequence, read N- to C-terminus: Histidine ammonia-lyase (508 aa).

The segment at residues 143-145 (ASG) is a cross-link (5-imidazolinone (Ala-Gly)). The residue at position 144 (Ser144) is a 2,3-didehydroalanine (Ser).

The protein belongs to the PAL/histidase family. Post-translationally, contains an active site 4-methylidene-imidazol-5-one (MIO), which is formed autocatalytically by cyclization and dehydration of residues Ala-Ser-Gly.

The protein localises to the cytoplasm. The catalysed reaction is L-histidine = trans-urocanate + NH4(+). It functions in the pathway amino-acid degradation; L-histidine degradation into L-glutamate; N-formimidoyl-L-glutamate from L-histidine: step 1/3. The protein is Histidine ammonia-lyase of Anaeromyxobacter dehalogenans (strain 2CP-C).